We begin with the raw amino-acid sequence, 433 residues long: Serine--tRNA ligase (433 aa).

235–237 serves as a coordination point for L-serine; that stretch reads TSE. 266 to 268 is a binding site for ATP; sequence RSE. E289 lines the L-serine pocket. 353–356 is an ATP binding site; that stretch reads EISS. S388 contributes to the L-serine binding site.

The protein belongs to the class-II aminoacyl-tRNA synthetase family. Type-1 seryl-tRNA synthetase subfamily. In terms of assembly, homodimer. The tRNA molecule binds across the dimer.

Its subcellular location is the cytoplasm. The enzyme catalyses tRNA(Ser) + L-serine + ATP = L-seryl-tRNA(Ser) + AMP + diphosphate + H(+). It carries out the reaction tRNA(Sec) + L-serine + ATP = L-seryl-tRNA(Sec) + AMP + diphosphate + H(+). It functions in the pathway aminoacyl-tRNA biosynthesis; selenocysteinyl-tRNA(Sec) biosynthesis; L-seryl-tRNA(Sec) from L-serine and tRNA(Sec): step 1/1. Its function is as follows. Catalyzes the attachment of serine to tRNA(Ser). Is also able to aminoacylate tRNA(Sec) with serine, to form the misacylated tRNA L-seryl-tRNA(Sec), which will be further converted into selenocysteinyl-tRNA(Sec). This is Serine--tRNA ligase from Burkholderia ambifaria (strain MC40-6).